Consider the following 257-residue polypeptide: MGYLKRFALYISVMILIFAIAGCGKGNETKEDSKEEQIKKSFAITLDMYPIKNLEDLYDKEGYRDSEFKKGDKGMWTIYTDFAKSNKPGELDDEGMVLNLDRNTRTAKGHYFVTTFYRNGKLPDEKNYKIEMKNNKIILLDEVKDDKLKQKIENFKFFGQYANLKELRKYNNGDVSINENVPSYDVEYKMSNKDEIVKELRSRYNISTEKSPILKMHIDGDLKGSSVGYRKLEIDFSKRENSKLSVIEFLSYKPAKK.

The N-terminal stretch at 1–22 is a signal peptide; it reads MGYLKRFALYISVMILIFAIAG. The N-palmitoyl cysteine moiety is linked to residue Cys-23. The S-diacylglycerol cysteine moiety is linked to residue Cys-23.

Belongs to the staphylococcal tandem lipoprotein family.

It is found in the cell membrane. This is an uncharacterized protein from Staphylococcus aureus (strain USA300).